A 103-amino-acid chain; its full sequence is N(4)-acetylcytidine amidohydrolase (103 aa).

Positions 6 to 101 constitute an ASCH domain; it reads ITFFQRFQDD…QTQFYVIEFK (96 aa). Lysine 21 functions as the Proton acceptor in the catalytic mechanism. The Nucleophile role is filled by threonine 24. The Proton donor role is filled by glutamate 74.

This sequence belongs to the N(4)-acetylcytidine amidohydrolase family.

It carries out the reaction N(4)-acetylcytidine + H2O = cytidine + acetate + H(+). The enzyme catalyses N(4)-acetyl-2'-deoxycytidine + H2O = 2'-deoxycytidine + acetate + H(+). The catalysed reaction is N(4)-acetylcytosine + H2O = cytosine + acetate + H(+). In terms of biological role, catalyzes the hydrolysis of N(4)-acetylcytidine (ac4C). This chain is N(4)-acetylcytidine amidohydrolase (yqfB), found in Escherichia coli (strain K12 / MC4100 / BW2952).